The primary structure comprises 323 residues: Probable cell division protein WhiA (323 aa).

A DNA-binding region (H-T-H motif) is located at residues 275–309 (TLKELGEMLTTGQVSKSGINHRLRKLDQIAERLRS).

This sequence belongs to the WhiA family.

Involved in cell division and chromosome segregation. The polypeptide is Probable cell division protein WhiA (Listeria monocytogenes serotype 4a (strain HCC23)).